The primary structure comprises 580 residues: UPF0329 protein ECU06_0080 (580 aa).

The segment covering 308-330 has biased composition (basic and acidic residues); that stretch reads RQKRREREMEKSMKELLRDEEKA. Residues 308-384 form a disordered region; sequence RQKRREREME…KTGKKSKGGR (77 aa). Basic residues predominate over residues 331–340; sequence KSKKGRKKKS. Residues 351 to 363 are compositionally biased toward acidic residues; sequence SETEEVEASEEME. The span at 372–384 shows a compositional bias: basic residues; it reads ARRKTGKKSKGGR.

This sequence belongs to the UPF0329 family.

The polypeptide is UPF0329 protein ECU06_0080 (Encephalitozoon cuniculi (strain GB-M1) (Microsporidian parasite)).